Reading from the N-terminus, the 218-residue chain is Large ribosomal subunit protein eL14 (218 aa).

Lys79 is subject to N6-acetyllysine. Residue Lys85 is modified to N6-acetyllysine; alternate. Position 85 is an N6-succinyllysine; alternate (Lys85). Lys124 participates in a covalent cross-link: Glycyl lysine isopeptide (Lys-Gly) (interchain with G-Cter in SUMO2). Ser139 is subject to Phosphoserine. Positions 159–218 (VPAKKATAAGKKAAAQKAPAQKAPAQKAAGQKAAQPPKAQKGQKPPAQKAPAPKASGKKA) are disordered. 6 repeat units span residues 174–178 (QKAPA), 179–183 (QKAPA), 184–188 (QKAAG), 189–193 (QKAAQ), 196–198 (KAQ), and 199–201 (KGQ). The interval 174 to 193 (QKAPAQKAPAQKAAGQKAAQ) is 4 X 5 AA tandem repeats of Q-K-A-[PAS]-X. The tract at residues 196–201 (KAQKGQ) is 2 X 3 AA tandem repeats of K-[GA]-Q. Lys207 bears the N6-succinyllysine mark.

It belongs to the eukaryotic ribosomal protein eL14 family. Component of the large ribosomal subunit.

The protein resides in the cytoplasm. Component of the large ribosomal subunit. The ribosome is a large ribonucleoprotein complex responsible for the synthesis of proteins in the cell. The protein is Large ribosomal subunit protein eL14 (RPL14) of Oryctolagus cuniculus (Rabbit).